Here is a 360-residue protein sequence, read N- to C-terminus: 3-dehydroquinate synthase (360 aa).

Residues 71–76, 105–109, 129–130, lysine 142, lysine 151, and 169–172 each bind NAD(+); these read DGEQYK, GVVGD, TT, and TLNT. Positions 184, 248, and 265 each coordinate Zn(2+).

It belongs to the sugar phosphate cyclases superfamily. Dehydroquinate synthase family. Co(2+) is required as a cofactor. Zn(2+) serves as cofactor. The cofactor is NAD(+).

The protein localises to the cytoplasm. The catalysed reaction is 7-phospho-2-dehydro-3-deoxy-D-arabino-heptonate = 3-dehydroquinate + phosphate. It functions in the pathway metabolic intermediate biosynthesis; chorismate biosynthesis; chorismate from D-erythrose 4-phosphate and phosphoenolpyruvate: step 2/7. Functionally, catalyzes the conversion of 3-deoxy-D-arabino-heptulosonate 7-phosphate (DAHP) to dehydroquinate (DHQ). This Coxiella burnetii (strain CbuG_Q212) (Coxiella burnetii (strain Q212)) protein is 3-dehydroquinate synthase.